Reading from the N-terminus, the 383-residue chain is Histidine decarboxylase (383 aa).

H120 is a binding site for substrate. K233 carries the post-translational modification N6-(pyridoxal phosphate)lysine.

Belongs to the group II decarboxylase family. As to quaternary structure, homotetramer. Requires pyridoxal 5'-phosphate as cofactor.

The enzyme catalyses L-histidine + H(+) = histamine + CO2. The sequence is that of Histidine decarboxylase from Acinetobacter baumannii (strain ACICU).